Here is an 874-residue protein sequence, read N- to C-terminus: Cap-specific mRNA (nucleoside-2'-O-)-methyltransferase 1A (874 aa).

Residues 1 to 10 (MSERGDDDRT) are compositionally biased toward basic and acidic residues. The segment at 1 to 64 (MSERGDDDRT…APPTKQKTKA (64 aa)) is disordered. The 47-residue stretch at 60 to 106 (QKTKAEEMMERMGYKAGEGLGKNKQGIQEPVALSTQRGKTGLGHEGA) folds into the G-patch domain. Residues 211 to 440 (FFQNRAAMKT…ERYITCKGLR (230 aa)) form the RrmJ-type SAM-dependent 2'-O-MTase domain. S-adenosyl-L-methionine contacts are provided by Gly-273 and Asp-354. The active-site Proton acceptor is the Lys-394. A disordered region spans residues 535–555 (PNKQRPRGGDRGSRNGNQERL).

It carries out the reaction a 5'-end (N(7)-methyl 5'-triphosphoguanosine)-ribonucleoside in mRNA + S-adenosyl-L-methionine = a 5'-end (N(7)-methyl 5'-triphosphoguanosine)-(2'-O-methyl-ribonucleoside) in mRNA + S-adenosyl-L-homocysteine + H(+). S-adenosyl-L-methionine-dependent methyltransferase that mediates mRNA cap1 2'-O-ribose methylation to the 5'-cap structure of mRNAs. Methylates the ribose of the first nucleotide of a m(7)GpppG-capped mRNA to produce m(7)GpppNmp (cap1). Cap1 modification is linked to higher levels of translation. The polypeptide is Cap-specific mRNA (nucleoside-2'-O-)-methyltransferase 1A (Caenorhabditis briggsae).